We begin with the raw amino-acid sequence, 56 residues long: Large ribosomal subunit protein eL37 (56 aa).

Zn(2+) is bound by residues Cys-19, Cys-22, Cys-34, and Cys-37. Residues 19–37 (CRRCGSVSLNVHTKQCTSC) form a C4-type zinc finger.

Belongs to the eukaryotic ribosomal protein eL37 family. It depends on Zn(2+) as a cofactor.

Binds to the 23S rRNA. This chain is Large ribosomal subunit protein eL37, found in Methanosarcina mazei (strain ATCC BAA-159 / DSM 3647 / Goe1 / Go1 / JCM 11833 / OCM 88) (Methanosarcina frisia).